The primary structure comprises 230 residues: Probable septum site-determining protein MinC (230 aa).

Belongs to the MinC family. In terms of assembly, interacts with MinD and FtsZ.

In terms of biological role, cell division inhibitor that blocks the formation of polar Z ring septums. Rapidly oscillates between the poles of the cell to destabilize FtsZ filaments that have formed before they mature into polar Z rings. Prevents FtsZ polymerization. This chain is Probable septum site-determining protein MinC, found in Cronobacter sakazakii (strain ATCC BAA-894) (Enterobacter sakazakii).